The chain runs to 295 residues: Geranylfarnesyl diphosphate synthase (295 aa).

Residues K51, R54, and H83 each contribute to the isopentenyl diphosphate site. Mg(2+) is bound by residues D90 and D94. R99 is a binding site for an all-trans-polyprenyl diphosphate. R100 contributes to the isopentenyl diphosphate binding site. An all-trans-polyprenyl diphosphate contacts are provided by K174, T175, and Q212.

Belongs to the FPP/GGPP synthase family. Homodimer. The cofactor is Mg(2+).

The enzyme catalyses isopentenyl diphosphate + (2E,6E,10E)-geranylgeranyl diphosphate = (2E,6E,10E,14E)-geranylfarnesyl diphosphate + diphosphate. Involved in biosynthesis of the polyprenyl side-chain of methanophenazine, an electron carrier utilized for methanogenesis. Catalyzes the condensation of isopentenyl pyrophosphate with the allylic pyrophosphates to yield geranylfarnesyl diphosphate (GFPP). It prefers geranylgeranyl diphosphate (GGPP) and farnesyl diphosphate (FPP) as allylic substrate. The polypeptide is Geranylfarnesyl diphosphate synthase (Methanosarcina mazei (strain ATCC BAA-159 / DSM 3647 / Goe1 / Go1 / JCM 11833 / OCM 88) (Methanosarcina frisia)).